The primary structure comprises 385 residues: 8-amino-7-oxononanoate synthase (385 aa).

Arg21 contacts substrate. Gly108–Phe109 serves as a coordination point for pyridoxal 5'-phosphate. His133 serves as a coordination point for substrate. Positions 179, 207, and 233 each coordinate pyridoxal 5'-phosphate. Residue Lys236 is modified to N6-(pyridoxal phosphate)lysine. Residue Thr352 participates in substrate binding.

This sequence belongs to the class-II pyridoxal-phosphate-dependent aminotransferase family. BioF subfamily. As to quaternary structure, homodimer. The cofactor is pyridoxal 5'-phosphate.

It catalyses the reaction 6-carboxyhexanoyl-[ACP] + L-alanine + H(+) = (8S)-8-amino-7-oxononanoate + holo-[ACP] + CO2. The protein operates within cofactor biosynthesis; biotin biosynthesis. Its function is as follows. Catalyzes the decarboxylative condensation of pimeloyl-[acyl-carrier protein] and L-alanine to produce 8-amino-7-oxononanoate (AON), [acyl-carrier protein], and carbon dioxide. This chain is 8-amino-7-oxononanoate synthase, found in Salmonella paratyphi C (strain RKS4594).